The following is a 355-amino-acid chain: NADH-quinone oxidoreductase subunit H (355 aa).

The next 8 helical transmembrane spans lie at 25–45 (LVRI…LILW), 91–111 (WLYL…WAVI), 126–146 (LLYA…AGWA), 170–190 (MGFA…SEIV), 205–225 (FLSW…VSGI), 253–273 (MAFA…SALA), 290–310 (FIPG…VFIW), and 330–350 (VFLP…MSPL).

The protein belongs to the complex I subunit 1 family. NDH-1 is composed of 14 different subunits. Subunits NuoA, H, J, K, L, M, N constitute the membrane sector of the complex.

Its subcellular location is the cell inner membrane. The enzyme catalyses a quinone + NADH + 5 H(+)(in) = a quinol + NAD(+) + 4 H(+)(out). NDH-1 shuttles electrons from NADH, via FMN and iron-sulfur (Fe-S) centers, to quinones in the respiratory chain. The immediate electron acceptor for the enzyme in this species is believed to be ubiquinone. Couples the redox reaction to proton translocation (for every two electrons transferred, four hydrogen ions are translocated across the cytoplasmic membrane), and thus conserves the redox energy in a proton gradient. This subunit may bind ubiquinone. The chain is NADH-quinone oxidoreductase subunit H from Burkholderia vietnamiensis (strain G4 / LMG 22486) (Burkholderia cepacia (strain R1808)).